The chain runs to 329 residues: GTP 3',8-cyclase (329 aa).

The Radical SAM core domain maps to 8 to 234 (AFARKFYYLR…QLRQRSDGPA (227 aa)). R17 serves as a coordination point for GTP. Residues C24 and C28 each contribute to the [4Fe-4S] cluster site. Y30 contributes to the S-adenosyl-L-methionine binding site. Residue C31 coordinates [4Fe-4S] cluster. R68 contributes to the GTP binding site. G72 is a binding site for S-adenosyl-L-methionine. GTP is bound at residue T99. S123 is an S-adenosyl-L-methionine binding site. K160 contributes to the GTP binding site. S-adenosyl-L-methionine is bound at residue M194. C257 and C260 together coordinate [4Fe-4S] cluster. Residue 262–264 (RLR) coordinates GTP. C274 is a binding site for [4Fe-4S] cluster.

It belongs to the radical SAM superfamily. MoaA family. As to quaternary structure, monomer and homodimer. Requires [4Fe-4S] cluster as cofactor.

It catalyses the reaction GTP + AH2 + S-adenosyl-L-methionine = (8S)-3',8-cyclo-7,8-dihydroguanosine 5'-triphosphate + 5'-deoxyadenosine + L-methionine + A + H(+). It functions in the pathway cofactor biosynthesis; molybdopterin biosynthesis. In terms of biological role, catalyzes the cyclization of GTP to (8S)-3',8-cyclo-7,8-dihydroguanosine 5'-triphosphate. The protein is GTP 3',8-cyclase of Shigella dysenteriae serotype 1 (strain Sd197).